The following is a 217-amino-acid chain: tRNA (guanine-N(7)-)-methyltransferase (217 aa).

S-adenosyl-L-methionine is bound by residues Glu44, Glu69, Asn96, and Asp118. Asp118 is an active-site residue. Lys122 serves as a coordination point for substrate. The interaction with RNA stretch occupies residues 124 to 129; the sequence is RHEKRR. Residues Asp154 and 191–194 contribute to the substrate site; that span reads TEYE.

Belongs to the class I-like SAM-binding methyltransferase superfamily. TrmB family.

The enzyme catalyses guanosine(46) in tRNA + S-adenosyl-L-methionine = N(7)-methylguanosine(46) in tRNA + S-adenosyl-L-homocysteine. It participates in tRNA modification; N(7)-methylguanine-tRNA biosynthesis. In terms of biological role, catalyzes the formation of N(7)-methylguanine at position 46 (m7G46) in tRNA. This is tRNA (guanine-N(7)-)-methyltransferase from Geobacillus kaustophilus (strain HTA426).